A 64-amino-acid polypeptide reads, in one-letter code: UPF0434 protein Bmul_0750/BMULJ_02510 (64 aa).

It belongs to the UPF0434 family.

In Burkholderia multivorans (strain ATCC 17616 / 249), this protein is UPF0434 protein Bmul_0750/BMULJ_02510.